The chain runs to 829 residues: MNQTPQIAQDLLKNPPQELQQLLNDPRTPDSARKAVQELQAPFVGPGTAGNKDGAKESPRLQIVNENQEFTKELSPYLAKWDLLDKGFAYDVVAVFGSQSTGKSTLLNRLFGTTFDVMDESKRQQTTKGIWMCPSQYSNTLVMDVEGTDGRERGEDQDFERKSALFSLASTEVLIVNLWEHQIGLYNGANMGLLKTVFEVNLGLFGGGGDNTKPKPQEKTLILFVIRDHVGATPMSNLTATLTQDMERIWDSLSKPAHLEDAVLSSYFDLSFAALPHKVLMPEKFEEAVLELRQRFTDRSREDYVFQPAYHKRIPADGVSFYMEGIWQQVLTNKDLDLPTQQELLAQFRCDEISTVVFEAFLASAKIVRRPVEAGSVVEGLGALMRDWLETALGKFDRDASRYHSAVYQRKRLDLLASLHASLSPLFLGQLKNLHKIETAKFSKDIVAGVKEPGYDFGVVVEEGKRRARERFLAGAKEVKVEETDWEYEHELALLDEDLKLIADKCRADETKKMVNAIERNVKRQILEPVEVAMSQPTKTMWDTVLKTYSDVIEAAEEAYLSKAKSYNCSDEENSTALASLRARAWLALRRKLEEQTSDSTVLTTLRTKFEDSFRYDEAGVPRVWRPEDDIEAAFRKAKDETLGLLPLFANIAPTEGSLLPELPPPEPSFDVESDPSPFDPSTAFTLLTATKLLSLESRFKRDADAAYVEAKRSMVSSVAQIPVWMYGVLVVLGWNEAMAVLFNPLYFAMLLVLAASGYIILQLGLAGPILQIASTVIREIRQMVVKKLREAFADVPEAQRILAQPVTASSSDEQERKGDLIKGEMLEK.

Topologically, residues 1–721 (MNQTPQIAQD…KRSMVSSVAQ (721 aa)) are cytoplasmic. Positions 87–310 (GFAYDVVAVF…REDYVFQPAY (224 aa)) constitute a GB1/RHD3-type G domain. 97–104 (GSQSTGKS) contributes to the GTP binding site. The stretch at 487–525 (EYEHELALLDEDLKLIADKCRADETKKMVNAIERNVKRQ) forms a coiled coil. A helical membrane pass occupies residues 722–742 (IPVWMYGVLVVLGWNEAMAVL). The Lumenal portion of the chain corresponds to 743-745 (FNP). A helical membrane pass occupies residues 746-766 (LYFAMLLVLAASGYIILQLGL). The Cytoplasmic portion of the chain corresponds to 767–829 (AGPILQIAST…DLIKGEMLEK (63 aa)). The segment at 806–829 (PVTASSSDEQERKGDLIKGEMLEK) is disordered. Residues 814-829 (EQERKGDLIKGEMLEK) are compositionally biased toward basic and acidic residues.

The protein belongs to the TRAFAC class dynamin-like GTPase superfamily. GB1/RHD3 GTPase family. RHD3 subfamily.

The protein resides in the endoplasmic reticulum membrane. Functionally, cooperates with the reticulon proteins and tubule-shaping DP1 family proteins to generate and maintain the structure of the tubular endoplasmic reticulum network. Has GTPase activity, which is required for its function in ER organization. This chain is Protein SEY1, found in Cryptococcus neoformans var. neoformans serotype D (strain B-3501A) (Filobasidiella neoformans).